The following is a 699-amino-acid chain: Nucleolar and coiled-body phosphoprotein 1 (699 aa).

A LisH domain is found at 10-42 (VPSDLYPLVLGFLRDNQLSEVANKFAKATGATQ). Position 33 is an N6-acetyllysine (K33). A disordered region spans residues 65–637 (ERKLQANGPV…VREEEIEVDS (573 aa)). Glycyl lysine isopeptide (Lys-Gly) (interchain with G-Cter in SUMO2) cross-links involve residues K67 and K76. The stretch at 84-95 (SSDSEDSSEEEE) is one Acidic serine cluster 1 repeat. The 11 X 12 AA approximate repeats of an acidic serine cluster stretch occupies residues 84-566 (SSDSEDSSEE…GKAAKNSEEE (483 aa)). Acidic residues predominate over residues 86 to 97 (DSEDSSEEEEEV). Residues S87, S90, and S91 each carry the phosphoserine modification. Position 91 is a diphosphoserine (S91). Residues 100 to 110 (PPAKKAAVPAK) are compositionally biased toward low complexity. One copy of the Acidic serine cluster 2 repeat lies at 125–136 (ESSSSEESSDDD). The span at 144 to 159 (QPVQKGVKPQAKAAKA) shows a compositional bias: low complexity. One copy of the Acidic serine cluster 3 repeat lies at 167 to 178 (SDSDSDSSSEDE). K186 participates in a covalent cross-link: Glycyl lysine isopeptide (Lys-Gly) (interchain with G-Cter in SUMO2). T188 carries the phosphothreonine modification. Residue K193 forms a Glycyl lysine isopeptide (Lys-Gly) (interchain with G-Cter in SUMO2) linkage. 2 stretches are compositionally biased toward low complexity: residues 193–227 (KAQT…SSSS) and 236–261 (AATP…TTPT). Residues 204 to 382 (RAAPKIANGK…DDEAPSKPAG (179 aa)) form an interaction with RPA194 region. Residues 221-232 (SSSSSSSDDSEE) form an Acidic serine cluster 4 repeat. The Acidic serine cluster 5 repeat unit spans residues 264 to 275 (SSSSEDSSSDEE). Residues 291–301 (SVPPPSAPPPK) are compositionally biased toward pro residues. A compositionally biased stretch (acidic residues) spans 321–333 (SSEDSSDESDSSS). One copy of the Acidic serine cluster 6 repeat lies at 325 to 336 (SSDESDSSSEEE). Glycyl lysine isopeptide (Lys-Gly) (interchain with G-Cter in SUMO2) cross-links involve residues K342 and K347. Residues S362, S363, and S366 each carry the phosphoserine modification. The stretch at 363–375 (SDSSDSDSSEDDE) is one Acidic serine cluster 7 repeat. A compositionally biased stretch (acidic residues) spans 366-375 (SDSDSSEDDE). Polar residues predominate over residues 381-397 (AGTTKNSSNKPAVTTKS). Glycyl lysine isopeptide (Lys-Gly) (interchain with G-Cter in SUMO2) cross-links involve residues K390 and K396. S397 carries the post-translational modification Phosphoserine. A compositionally biased stretch (low complexity) spans 398 to 409 (PAVKPAAAPKQP). Glycyl lysine isopeptide (Lys-Gly) (interchain with G-Cter in SUMO2) cross-links involve residues K401 and K407. An N6-acetyllysine; alternate modification is found at K415. K415 is covalently cross-linked (Glycyl lysine isopeptide (Lys-Gly) (interchain with G-Cter in SUMO1); alternate). A Glycyl lysine isopeptide (Lys-Gly) (interchain with G-Cter in SUMO2); alternate cross-link involves residue K415. One copy of the Acidic serine cluster 8 repeat lies at 425–436 (SSEEESSSSEEE). Residues K440 and K452 each participate in a glycyl lysine isopeptide (Lys-Gly) (interchain with G-Cter in SUMO2) cross-link. Low complexity-rich tracts occupy residues 441-476 (MVAT…SDSS) and 498-523 (AGGA…SSSD). S456 carries the phosphoserine modification. The Acidic serine cluster 9 repeat unit spans residues 470–481 (SSDSDSSSSEEE). K505 is covalently cross-linked (Glycyl lysine isopeptide (Lys-Gly) (interchain with G-Cter in SUMO2)). S508 is modified (phosphoserine). Residues 519-529 (SSSSDDSSEEE) form an Acidic serine cluster 10 repeat. S538 carries the phosphoserine modification. The segment covering 547 to 556 (NGTSALTAQN) has biased composition (polar residues). Residues 555-566 (QNGKAAKNSEEE) form an Acidic serine cluster 11 repeat. S563 carries the post-translational modification Phosphoserine. K572 participates in a covalent cross-link: Glycyl lysine isopeptide (Lys-Gly) (interchain with G-Cter in SUMO1). Residue K579 forms a Glycyl lysine isopeptide (Lys-Gly) (interchain with G-Cter in SUMO2) linkage. Phosphoserine is present on residues S580 and S582. K604 participates in a covalent cross-link: Glycyl lysine isopeptide (Lys-Gly) (interchain with G-Cter in SUMO2). Phosphothreonine is present on residues T607 and T610. Residue K613 forms a Glycyl lysine isopeptide (Lys-Gly) (interchain with G-Cter in SUMO2) linkage. S622 is subject to Phosphoserine. The span at 627–637 (RVREEEIEVDS) shows a compositional bias: basic and acidic residues. S643 carries the phosphoserine modification. A Glycyl lysine isopeptide (Lys-Gly) (interchain with G-Cter in SUMO2) cross-link involves residue K647. Position 663 is an N6-acetyllysine; alternate (K663). Residue K663 forms a Glycyl lysine isopeptide (Lys-Gly) (interchain with G-Cter in SUMO2); alternate linkage. R683 is modified (omega-N-methylarginine). S686 carries the phosphoserine modification. K695 participates in a covalent cross-link: Glycyl lysine isopeptide (Lys-Gly) (interchain with G-Cter in SUMO2). Residue S698 is modified to Phosphoserine.

This sequence belongs to the NOLC1 family. In terms of assembly, heterodimer; heterodimerizes with TCOF1 following monoubiquitination. Interacts with RNA polymerase I 194 kDa subunit (RPA194) and with casein kinase-II. Interacts with DKC1/NAP57, NOP58 and fibrillarin. Undergoes rapid and massive phosphorylation/dephosphorylation cycles on CK2 and PKC sites. NOLC1 is one of the mostly phosphorylated proteins in the cell. Post-translationally, ubiquitinated. Monoubiquitination by the BCR(KBTBD8) complex promotes the formation of a NOLC1-TCOF1 complex that acts as a platform to connect RNA polymerase I with enzymes responsible for ribosomal processing and modification, leading to remodel the translational program of differentiating cells in favor of neural crest specification. In terms of processing, pyrophosphorylated by 5-diphosphoinositol pentakisphosphate (5-IP7). Serine pyrophosphorylation is achieved by Mg(2+)-dependent, but enzyme independent transfer of a beta-phosphate from a inositol pyrophosphate to a pre-phosphorylated serine residue.

The protein localises to the nucleus. It localises to the nucleolus. The protein resides in the cytoplasm. Functionally, nucleolar protein that acts as a regulator of RNA polymerase I by connecting RNA polymerase I with enzymes responsible for ribosomal processing and modification. Required for neural crest specification: following monoubiquitination by the BCR(KBTBD8) complex, associates with TCOF1 and acts as a platform to connect RNA polymerase I with enzymes responsible for ribosomal processing and modification, leading to remodel the translational program of differentiating cells in favor of neural crest specification. Involved in nucleologenesis, possibly by playing a role in the maintenance of the fundamental structure of the fibrillar center and dense fibrillar component in the nucleolus. It has intrinsic GTPase and ATPase activities. This is Nucleolar and coiled-body phosphoprotein 1 from Homo sapiens (Human).